The following is a 349-amino-acid chain: KH domain-containing, RNA-binding, signal transduction-associated protein 2 (349 aa).

The 71-residue stretch at 65 to 135 (LIPVKQYPKF…HLSDELHVLI (71 aa)) folds into the KH domain. Disordered stretches follow at residues 182-284 (EDSG…DDQT) and 319-349 (PEEW…YGRY). 2 positions are modified to omega-N-methylarginine: Arg230 and Arg240. The span at 340–349 (GYREHPYGRY) shows a compositional bias: basic and acidic residues.

Belongs to the KHDRBS family. As to quaternary structure, self-associates to form homooligomers. Interacts with KHDRBS1/SAM68; heterooligomer formation of KHDRBS family proteins may modulate RNA substrate specificity. Interacts with RBMX. Interacts with SAFB, SFRS9 and YTHDC1. Interacts with FYN and PLCG1 (via SH3 domain). Interacts (phosphorylated) with FYN, GRB2, PLCG1 and RASA1 (via SH2 domain). Post-translationally, methylated. Tyrosine phosphorylated by FYN, PTK6 and SRC. Tyrosine phosphorylated by SRC during mitosis. Highly expressed in brain, lung, kidney and small intestine. Weakly expressed in placenta, liver, spleen, thymus, ovary and colon.

It localises to the nucleus. In terms of biological role, RNA-binding protein that plays a role in the regulation of alternative splicing and influences mRNA splice site selection and exon inclusion. Binds both poly(A) and poly(U) homopolymers. Phosphorylation by PTK6 inhibits its RNA-binding ability. Induces an increased concentration-dependent incorporation of exon in CD44 pre-mRNA by direct binding to purine-rich exonic enhancer. Can regulate alternative splicing of NRXN1 in the laminin G-like domain 6 containing the evolutionary conserved neurexin alternative spliced segment 4 (AS4) involved in neurexin selective targeting to postsynaptic partners. Regulates cell-type specific alternative splicing of NRXN1 at AS4 and acts synergystically with SAM68 in exon skipping. In contrast acts antagonistically with SAM68 in NRXN3 exon skipping at AS4. Its phosphorylation by FYN inhibits its ability to regulate splice site selection. May function as an adapter protein for Src kinases during mitosis. This is KH domain-containing, RNA-binding, signal transduction-associated protein 2 (KHDRBS2) from Homo sapiens (Human).